Consider the following 1621-residue polypeptide: ABC transporter A family member 2 (1621 aa).

7 helical membrane passes run 30 to 50, 234 to 254, 276 to 296, 309 to 329, 338 to 358, 365 to 385, and 405 to 425; these read ILFPIIVILVIFAILVLVMAF, SVFITAALMIFGFRLITDLVI, ISWMITSLVTALPVNLIISII, GVVIFTLILYLLTLLLLAFIL, FCGLLSFVIIIAINIGGIFVA, GAKLFLCLISPIAIACSIFAM, and NQVIGMLVLDIFFYIFLVWYL. Positions 484–717 constitute an ABC transporter 1 domain; sequence ISIRNLRKEY…FGCGYLLTCS (234 aa). An ATP-binding site is contributed by 520–527; it reads GPNGSGKS. The next 7 membrane-spanning stretches (helical) occupy residues 856–876, 1033–1053, 1083–1103, 1111–1131, 1142–1162, 1183–1203, and 1227–1247; these read FFLTLVIPLVFIIGSIIMYKA, IVYFIIIMMAGYALMAGSFAG, VWDYFFSFILILLTTCILAGI, FGLMFLCLILFCVSVVPLSYL, ATGAITAIHFAIGIIFVIISL, VDIVFCILSPLFAYSRILFLV, and GSPMIILAAHCIVWVSWIMIL. The 236-residue stretch at 1293-1528 folds into the ABC transporter 2 domain; sequence LQFRNLHKLF…FGAGYTFDVK (236 aa). 1331 to 1338 contacts ATP; it reads GLNGAGKT.

This sequence belongs to the ABC transporter superfamily. ABCA family.

The protein resides in the membrane. In Dictyostelium discoideum (Social amoeba), this protein is ABC transporter A family member 2 (abcA2).